The sequence spans 552 residues: MKSDSIKKGPGKAAQRSLLKALGLTNEEISRPIIGIVSSQNEIIPGHMNLDKITEAVRKGVLMSGGTPLVVPTIGVCDGIAMGHEGMKYSLVTRELIADSIECMVKAHAFDALVLIPNCDKIVPGMVMAALRVNVPAVVISGGPMLAGKHKGKDISLTTMFEAVGSYENGTMDEKELCDLEECACPTCGSCSGMFTANSMNCLCEVLGIALPGNGTIPAVFSERIRLAKKAGMAVMDMLKNDIKPRDIINERSIMNALKADMALGCSTNSVLHITAIANEAKVNMNLDIINDLSSKTPDLCKLAPASNIHIENLYAAGGITAIMNELSKKDILDLNCITVTGKTQGENIKGVTVKDYEVIRPIDNPYSENGGIAILRGNLAPDGAVVKRAAVLPKMLVHEGPARVFNSEEEANTAIFDKTINPGDVIVIRYEGPKGGPGMREMLQATAAIAGMGLDDSVALITDGRFSGATRGASIGHVSPEAASGGMIGLLENGDIISIDINNAKLEVKLSDEEIKRRKLNFKPLEPKVKEGYLSRYAKLVSSASEGAILK.

Asp78 lines the Mg(2+) pocket. A [2Fe-2S] cluster-binding site is contributed by Cys119. The Mg(2+) site is built by Asp120 and Lys121. N6-carboxylysine is present on Lys121. Residue Cys191 coordinates [2Fe-2S] cluster. Glu442 provides a ligand contact to Mg(2+). Ser468 serves as the catalytic Proton acceptor.

The protein belongs to the IlvD/Edd family. Homodimer. [2Fe-2S] cluster serves as cofactor. It depends on Mg(2+) as a cofactor.

The enzyme catalyses (2R)-2,3-dihydroxy-3-methylbutanoate = 3-methyl-2-oxobutanoate + H2O. It catalyses the reaction (2R,3R)-2,3-dihydroxy-3-methylpentanoate = (S)-3-methyl-2-oxopentanoate + H2O. The protein operates within amino-acid biosynthesis; L-isoleucine biosynthesis; L-isoleucine from 2-oxobutanoate: step 3/4. Its pathway is amino-acid biosynthesis; L-valine biosynthesis; L-valine from pyruvate: step 3/4. Functionally, functions in the biosynthesis of branched-chain amino acids. Catalyzes the dehydration of (2R,3R)-2,3-dihydroxy-3-methylpentanoate (2,3-dihydroxy-3-methylvalerate) into 2-oxo-3-methylpentanoate (2-oxo-3-methylvalerate) and of (2R)-2,3-dihydroxy-3-methylbutanoate (2,3-dihydroxyisovalerate) into 2-oxo-3-methylbutanoate (2-oxoisovalerate), the penultimate precursor to L-isoleucine and L-valine, respectively. This Clostridium botulinum (strain Alaska E43 / Type E3) protein is Dihydroxy-acid dehydratase.